A 113-amino-acid chain; its full sequence is Gas vesicle protein I2 (113 aa).

The segment at 1-93 (MTPTNRHTHG…TVPEQPTHAT (93 aa)) is disordered. The span at 11–22 (QNAQHARRNAQQ) shows a compositional bias: low complexity. Residues 52–63 (EQPTSDTTNPAA) are compositionally biased toward polar residues. Residues 69–81 (AQRTNAQNAARNA) show a composition bias toward low complexity. Positions 82-93 (HSTVPEQPTHAT) are enriched in polar residues.

This sequence belongs to the gas vesicle GvpI family. GvpF to GvpM interact with each other in vitro, and may form multi-subunit complex(es). Interacts with GvpC and GvpO.

The protein resides in the gas vesicle. In terms of biological role, proteins GvpF to GvpM might be involved in nucleating gas vesicle formation. A minor component of the gas vesicle. Gas vesicles are hollow, gas filled proteinaceous nanostructures found in several microbial planktonic microorganisms. They allow positioning of halobacteria at the optimal depth for growth in the poorly aerated, shallow brine pools of their habitat. Expression of 2 c-vac DNA fragments containing 2 divergently transcribed regions (gvpE-gvpF-gvpG-gvpH-gvpI-gvpJ-gvpK-gvpL-gvpM and gvpA-gvpC-gvpN-gvpO) allows H.volcanii to produce gas vesicles. In Halobacterium salinarum (strain ATCC 700922 / JCM 11081 / NRC-1) (Halobacterium halobium), this protein is Gas vesicle protein I2.